A 380-amino-acid polypeptide reads, in one-letter code: tRNA-specific 2-thiouridylase MnmA (380 aa).

Residues Gly14–Ser21 and Met40 contribute to the ATP site. The segment at Asn100–Asp102 is interaction with target base in tRNA. Cys105 (nucleophile) is an active-site residue. Cys105 and Cys203 are joined by a disulfide. Gly129 provides a ligand contact to ATP. The segment at Lys153 to Gln155 is interaction with tRNA. Cys203 (cysteine persulfide intermediate) is an active-site residue. The interval Arg322–Tyr323 is interaction with tRNA.

It belongs to the MnmA/TRMU family.

Its subcellular location is the cytoplasm. The catalysed reaction is S-sulfanyl-L-cysteinyl-[protein] + uridine(34) in tRNA + AH2 + ATP = 2-thiouridine(34) in tRNA + L-cysteinyl-[protein] + A + AMP + diphosphate + H(+). Its function is as follows. Catalyzes the 2-thiolation of uridine at the wobble position (U34) of tRNA, leading to the formation of s(2)U34. This is tRNA-specific 2-thiouridylase MnmA from Leptothrix cholodnii (strain ATCC 51168 / LMG 8142 / SP-6) (Leptothrix discophora (strain SP-6)).